The following is a 136-amino-acid chain: Cytidine deaminase (136 aa).

The region spanning 1-128 (MDVEKLIAES…KLLPGAFSKE (128 aa)) is the CMP/dCMP-type deaminase domain. 42–44 (NIE) provides a ligand contact to substrate. Cys-53 provides a ligand contact to Zn(2+). Glu-55 functions as the Proton donor in the catalytic mechanism. Zn(2+) contacts are provided by Cys-86 and Cys-89.

This sequence belongs to the cytidine and deoxycytidylate deaminase family. Requires Zn(2+) as cofactor.

The catalysed reaction is cytidine + H2O + H(+) = uridine + NH4(+). It catalyses the reaction 2'-deoxycytidine + H2O + H(+) = 2'-deoxyuridine + NH4(+). This enzyme scavenges exogenous and endogenous cytidine and 2'-deoxycytidine for UMP synthesis. This is Cytidine deaminase (cdd) from Sporosarcina psychrophila (Bacillus psychrophilus).